Here is a 1077-residue protein sequence, read N- to C-terminus: Error-prone DNA polymerase (1077 aa).

The protein belongs to the DNA polymerase type-C family. DnaE2 subfamily.

It localises to the cytoplasm. It carries out the reaction DNA(n) + a 2'-deoxyribonucleoside 5'-triphosphate = DNA(n+1) + diphosphate. Functionally, DNA polymerase involved in damage-induced mutagenesis and translesion synthesis (TLS). It is not the major replicative DNA polymerase. This Brucella melitensis biotype 1 (strain ATCC 23456 / CCUG 17765 / NCTC 10094 / 16M) protein is Error-prone DNA polymerase.